The sequence spans 645 residues: DEAD-box ATP-dependent RNA helicase 46 (645 aa).

Disordered regions lie at residues 1 to 22 (MAATASAIRYAPEDPNLPKPWK) and 44 to 137 (YERP…AGNE). One can recognise a WW domain in the interval 15 to 49 (PNLPKPWKGLVDSRTGYLYFWNPETNVTQYERPAS). Positions 60–72 (VSSSVQTNQQSSS) are enriched in low complexity. Positions 77–91 (GKEDDKYGRGSDGPK) are enriched in basic and acidic residues. Low complexity predominate over residues 108–136 (SSNDAASGLGNASSGGSSARGPPSSAAGN). The Q motif motif lies at 161–189 (MSFEATGLPNELLREVYSAGFSAPSPIQA). The Helicase ATP-binding domain maps to 192–366 (WPIAMQNRDI…ADLLVNPAQV (175 aa)). 205-212 (AKTGSGKT) serves as a coordination point for ATP. Positions 314-317 (DEAD) match the DEAD box motif. Positions 395 to 539 (RLEQILRSQE…KVPPQVREMA (145 aa)) constitute a Helicase C-terminal domain. Positions 532 to 645 (PPQVREMATR…FHEAMMMKNR (114 aa)) are disordered. Residues 556-597 (SSGGGGGRGGYGDSGYGGRGESGYGSRGDSGYGGRGDSGGRG) are compositionally biased toward gly residues. The span at 598–608 (SWAPSRDSSGS) shows a compositional bias: low complexity. The span at 612 to 623 (GRERSRSPERFR) shows a compositional bias: basic and acidic residues. The span at 624 to 634 (GGPPSTSSPPR) shows a compositional bias: low complexity.

It belongs to the DEAD box helicase family. DDX5/DBP2 subfamily.

The catalysed reaction is ATP + H2O = ADP + phosphate + H(+). The chain is DEAD-box ATP-dependent RNA helicase 46 (RH46) from Arabidopsis thaliana (Mouse-ear cress).